The primary structure comprises 317 residues: Olfactory receptor 6Q1 (317 aa).

Residues Met-1–Leu-27 are Extracellular-facing. N-linked (GlcNAc...) asparagine glycosylation is present at Asn-7. The chain crosses the membrane as a helical span at residues Leu-28–Ile-48. Over Leu-49–Arg-56 the chain is Cytoplasmic. Residues Leu-57–Ser-77 form a helical membrane-spanning segment. The Extracellular segment spans residues Val-78–Ser-103. An N-linked (GlcNAc...) asparagine glycan is attached at Asn-95. Cys-101 and Cys-193 are disulfide-bonded. A helical transmembrane segment spans residues Gln-104–Tyr-124. The Cytoplasmic portion of the chain corresponds to Asp-125 to Gly-143. Residues Thr-144–Ile-164 traverse the membrane as a helical segment. The Extracellular portion of the chain corresponds to Tyr-165–Thr-201. A helical transmembrane segment spans residues Val-202–Ser-221. Topologically, residues Tyr-222–Ala-241 are cytoplasmic. Residues Phe-242–Met-262 form a helical membrane-spanning segment. At Tyr-263–Asn-275 the chain is on the extracellular side. Residues Lys-276–Leu-296 form a helical membrane-spanning segment. Residues Arg-297–Gln-317 are Cytoplasmic-facing.

This sequence belongs to the G-protein coupled receptor 1 family.

Its subcellular location is the cell membrane. In terms of biological role, odorant receptor. This chain is Olfactory receptor 6Q1 (OR6Q1), found in Homo sapiens (Human).